The primary structure comprises 356 residues: V-type proton ATPase subunit d (356 aa).

This sequence belongs to the V-ATPase V0D/AC39 subunit family. As to quaternary structure, V-ATPase is a heteromultimeric enzyme composed of a peripheral catalytic V1 complex (components A to H) attached to an integral membrane V0 proton pore complex (components: a, c, c', c'' and d).

Functionally, subunit of the integral membrane V0 complex of vacuolar ATPase. Vacuolar ATPase is responsible for acidifying a variety of intracellular compartments in eukaryotic cells, thus providing most of the energy required for transport processes in the vacuolar system. The polypeptide is V-type proton ATPase subunit d (vatD-1) (Dictyostelium discoideum (Social amoeba)).